The following is a 756-amino-acid chain: 5-methyltetrahydropteroyltriglutamate--homocysteine methyltransferase (756 aa).

Residues 16–19 and Lys116 contribute to the 5-methyltetrahydropteroyltri-L-glutamate site; that span reads RELK. Residues 433–435 and Glu486 contribute to the L-homocysteine site; that span reads IGS. L-methionine-binding positions include 433 to 435 and Glu486; that span reads IGS. Residues 517–518 and Trp563 contribute to the 5-methyltetrahydropteroyltri-L-glutamate site; that span reads RC. An L-homocysteine-binding site is contributed by Asp601. Asp601 lines the L-methionine pocket. Position 607 (Glu607) interacts with 5-methyltetrahydropteroyltri-L-glutamate. Zn(2+)-binding residues include His643, Cys645, and Glu667. The active-site Proton donor is the His696. Residue Cys728 participates in Zn(2+) binding.

It belongs to the vitamin-B12 independent methionine synthase family. Requires Zn(2+) as cofactor.

The enzyme catalyses 5-methyltetrahydropteroyltri-L-glutamate + L-homocysteine = tetrahydropteroyltri-L-glutamate + L-methionine. It functions in the pathway amino-acid biosynthesis; L-methionine biosynthesis via de novo pathway; L-methionine from L-homocysteine (MetE route): step 1/1. Functionally, catalyzes the transfer of a methyl group from 5-methyltetrahydrofolate to homocysteine resulting in methionine formation. The polypeptide is 5-methyltetrahydropteroyltriglutamate--homocysteine methyltransferase (Buchnera aphidicola subsp. Baizongia pistaciae (strain Bp)).